The sequence spans 554 residues: Apyrase (554 aa).

The N-terminal stretch at 1-21 (MFKITVFIYVLQLILPSKVHS) is a signal peptide. Residues aspartate 43, histidine 45, aspartate 92, asparagine 124, histidine 224, and histidine 248 each contribute to the a divalent metal cation site. Positions 358, 394, 399, 418, 504, and 510 each coordinate AMP.

This sequence belongs to the 5'-nucleotidase family. It depends on a divalent metal cation as a cofactor. Salivary gland (at protein level).

It localises to the secreted. The enzyme catalyses a ribonucleoside 5'-triphosphate + 2 H2O = a ribonucleoside 5'-phosphate + 2 phosphate + 2 H(+). Functionally, facilitates hematophagy by inhibiting ADP-dependent platelet aggregation in the host. Cleaves adenosine triphosphate (ATP) and adenosine diphosphate (ADP) to adenosine monophosphate (AMP) and inorganic phosphate. Shows potential for antithrombotic activity. Can induce basophil activation. May reduce probing time by facilitating the speed of locating blood. This is Apyrase from Tabanus yao (Horsefly).